The sequence spans 406 residues: Tryptophan synthase beta chain (406 aa).

Residue Lys99 is modified to N6-(pyridoxal phosphate)lysine.

Belongs to the TrpB family. In terms of assembly, tetramer of two alpha and two beta chains. It depends on pyridoxal 5'-phosphate as a cofactor.

The catalysed reaction is (1S,2R)-1-C-(indol-3-yl)glycerol 3-phosphate + L-serine = D-glyceraldehyde 3-phosphate + L-tryptophan + H2O. Its pathway is amino-acid biosynthesis; L-tryptophan biosynthesis; L-tryptophan from chorismate: step 5/5. Its function is as follows. The beta subunit is responsible for the synthesis of L-tryptophan from indole and L-serine. In Allorhizobium ampelinum (strain ATCC BAA-846 / DSM 112012 / S4) (Agrobacterium vitis (strain S4)), this protein is Tryptophan synthase beta chain.